A 92-amino-acid polypeptide reads, in one-letter code: Small ribosomal subunit protein uS19 (92 aa).

Belongs to the universal ribosomal protein uS19 family.

Its function is as follows. Protein S19 forms a complex with S13 that binds strongly to the 16S ribosomal RNA. This Corynebacterium urealyticum (strain ATCC 43042 / DSM 7109) protein is Small ribosomal subunit protein uS19.